The following is a 311-amino-acid chain: Aspartate carbamoyltransferase catalytic subunit (311 aa).

The carbamoyl phosphate site is built by R55 and T56. K85 lines the L-aspartate pocket. Residues R106, H135, and Q138 each contribute to the carbamoyl phosphate site. Residues R168 and R230 each contribute to the L-aspartate site. Carbamoyl phosphate contacts are provided by L268 and P269.

This sequence belongs to the aspartate/ornithine carbamoyltransferase superfamily. ATCase family. In terms of assembly, heterododecamer (2C3:3R2) of six catalytic PyrB chains organized as two trimers (C3), and six regulatory PyrI chains organized as three dimers (R2).

It carries out the reaction carbamoyl phosphate + L-aspartate = N-carbamoyl-L-aspartate + phosphate + H(+). Its pathway is pyrimidine metabolism; UMP biosynthesis via de novo pathway; (S)-dihydroorotate from bicarbonate: step 2/3. Catalyzes the condensation of carbamoyl phosphate and aspartate to form carbamoyl aspartate and inorganic phosphate, the committed step in the de novo pyrimidine nucleotide biosynthesis pathway. This Klebsiella pneumoniae (strain 342) protein is Aspartate carbamoyltransferase catalytic subunit.